Here is a 580-residue protein sequence, read N- to C-terminus: D-erythrulose kinase (580 aa).

Positions 7–327 constitute a DhaK domain; that stretch reads DPARFTEDML…WAAPADTPAY (321 aa). Histidine 217 functions as the Tele-hemiaminal-histidine intermediate in the catalytic mechanism. The segment at 329 to 360 is disordered; it reads KGAAQQHVSGERRSEATARSASSGPKLAELSD. Residues 368–570 form the DhaL domain; that stretch reads RLVARAFDAM…LALCARTVAD (203 aa). ATP is bound by residues 397–403, 443–444, glycine 485, arginine 542, and 555–557; these read DGDHGRG, TS, and DAG.

The enzyme catalyses D-erythrulose + ATP = D-erythrulose 4-phosphate + ADP + H(+). It functions in the pathway carbohydrate metabolism; erythritol degradation. Its pathway is carbohydrate metabolism; D-threitol degradation. In terms of biological role, catalyzes the phosphorylation of D-erythrulose to D-erythrulose-4P. Involved in the degradation pathways of erythritol and D-threitol, that allow M.smegmatis to grow on these compounds as the sole carbon source. The chain is D-erythrulose kinase from Mycolicibacterium smegmatis (strain ATCC 700084 / mc(2)155) (Mycobacterium smegmatis).